The primary structure comprises 132 residues: Putative nickel-responsive regulator (132 aa).

Ni(2+) contacts are provided by His-77, His-88, His-90, and Cys-96.

It belongs to the transcriptional regulatory CopG/NikR family. Ni(2+) is required as a cofactor.

In terms of biological role, transcriptional regulator. In Brucella abortus (strain S19), this protein is Putative nickel-responsive regulator.